The sequence spans 2350 residues: Probable JmjC domain-containing histone demethylation protein 2C (2350 aa).

2 disordered regions span residues Thr-96 to Cys-302 and Pro-314 to His-336. The segment covering Ala-98–Ile-127 has biased composition (polar residues). Residues Ser-135 and Ser-138 each carry the phosphoserine modification. A compositionally biased stretch (basic and acidic residues) spans Asp-141 to Lys-160. Residues Gly-161–Arg-171 show a composition bias toward basic residues. A compositionally biased stretch (basic and acidic residues) spans Lys-172–Asn-189. Over residues Ala-190–Glu-200 the composition is skewed to low complexity. Phosphoserine occurs at positions 191 and 194. Basic and acidic residues predominate over residues Gln-257 to Thr-280. Polar residues predominate over residues Leu-281–Cys-302. Residues Ser-294 and Ser-320 each carry the phosphoserine modification. Phosphothreonine is present on Thr-324. 7 positions are modified to phosphoserine: Ser-420, Ser-436, Ser-457, Ser-458, Ser-460, Ser-471, and Ser-762. Disordered stretches follow at residues Ser-426–Ala-486, Ser-747–Thr-766, Arg-859–Val-883, Arg-1030–Leu-1083, and Glu-1422–Ser-1508. 2 stretches are compositionally biased toward low complexity: residues Ser-863–Ser-874 and Ser-1034–Pro-1045. Residues Ser-1071–Leu-1083 show a composition bias toward polar residues. Residues Lys-1454–Lys-1463 show a composition bias toward basic residues. Over residues Lys-1464 to Lys-1480 the composition is skewed to basic and acidic residues. A C6-type zinc finger spans residues Cys-1657–Cys-1682. Residues Lys-1776 to Pro-1818 are compositionally biased toward polar residues. Residues Lys-1776–Ser-1874 are disordered. Ser-1800 is modified (phosphoserine). The span at Ala-1826–Asp-1849 shows a compositional bias: basic and acidic residues. A compositionally biased stretch (polar residues) spans Ser-1855–Ser-1874. The short motif at Leu-1876–Leu-1880 is the LXXLL motif element. Positions Pro-1933–Lys-1962 are disordered. A Glycyl lysine isopeptide (Lys-Gly) (interchain with G-Cter in SUMO2) cross-link involves residue Lys-1942. A JmjC domain is found at Met-2084–Arg-2308. The Fe cation site is built by His-2146, Glu-2148, and His-2276.

It belongs to the JHDM2 histone demethylase family. It depends on Fe(2+) as a cofactor.

It is found in the nucleus. Probable histone demethylase that specifically demethylates 'Lys-9' of histone H3, thereby playing a central role in histone code. Demethylation of Lys residue generates formaldehyde and succinate. May be involved in hormone-dependent transcriptional activation, by participating in recruitment to androgen-receptor target genes. This is Probable JmjC domain-containing histone demethylation protein 2C (Jmjd1c) from Mus musculus (Mouse).